Consider the following 300-residue polypeptide: Sulfate adenylyltransferase subunit 2 (300 aa).

The disordered stretch occupies residues arginine 281 to phenylalanine 300.

The protein belongs to the PAPS reductase family. CysD subfamily. As to quaternary structure, heterodimer composed of CysD, the smaller subunit, and CysN.

It catalyses the reaction sulfate + ATP + H(+) = adenosine 5'-phosphosulfate + diphosphate. The protein operates within sulfur metabolism; hydrogen sulfide biosynthesis; sulfite from sulfate: step 1/3. With CysN forms the ATP sulfurylase (ATPS) that catalyzes the adenylation of sulfate producing adenosine 5'-phosphosulfate (APS) and diphosphate, the first enzymatic step in sulfur assimilation pathway. APS synthesis involves the formation of a high-energy phosphoric-sulfuric acid anhydride bond driven by GTP hydrolysis by CysN coupled to ATP hydrolysis by CysD. In Brucella canis (strain ATCC 23365 / NCTC 10854 / RM-666), this protein is Sulfate adenylyltransferase subunit 2.